Reading from the N-terminus, the 384-residue chain is tRNA-dihydrouridine(20) synthase [NAD(P)+] (384 aa).

Residues 12–14 (PMV) and Gln88 each bind FMN. Cys117 acts as the Proton donor in catalysis. FMN contacts are provided by residues Lys160, His188, 222 to 224 (NGA), and 249 to 250 (AE). Residues 359–384 (KQKRKQTDHIGSDTKKQKVVPLPTDI) are disordered. Over residues 363-374 (KQTDHIGSDTKK) the composition is skewed to basic and acidic residues.

This sequence belongs to the Dus family. Dus2 subfamily. In terms of assembly, monomer. FMN serves as cofactor. Post-translationally, N-glycosylated.

The protein resides in the cytoplasm. Its subcellular location is the nucleus. The catalysed reaction is 5,6-dihydrouridine(20) in tRNA + NADP(+) = uridine(20) in tRNA + NADPH + H(+). It carries out the reaction 5,6-dihydrouridine(20) in tRNA + NAD(+) = uridine(20) in tRNA + NADH + H(+). It catalyses the reaction a 5,6-dihydrouridine in mRNA + NAD(+) = a uridine in mRNA + NADH + H(+). The enzyme catalyses a 5,6-dihydrouridine in mRNA + NADP(+) = a uridine in mRNA + NADPH + H(+). Its function is as follows. Catalyzes the NADPH-dependent synthesis of dihydrouridine, a modified base found in the D-loop of most tRNAs. Specifically modifies U20 in cytoplasmic tRNAs. Also able to mediate dihydrouridylation of some mRNAs, thereby affecting their translation. This chain is tRNA-dihydrouridine(20) synthase [NAD(P)+] (SMM1), found in Saccharomyces cerevisiae (strain ATCC 204508 / S288c) (Baker's yeast).